The primary structure comprises 314 residues: Hydroxyacyl-coenzyme A dehydrogenase, mitochondrial (314 aa).

A mitochondrion-targeting transit peptide spans 1 to 12; sequence MAFVTRQFLRSM. NAD(+) contacts are provided by residues 34–39 and Asp-57; that span reads GGGLMG. Ser-73 contributes to the CoA binding site. At Lys-75 the chain carries N6-acetyllysine. Lys-80 serves as a coordination point for CoA. Lys-80 is modified (N6-succinyllysine). 2 positions are modified to N6-acetyllysine; alternate: Lys-81 and Lys-87. 2 positions are modified to N6-succinyllysine; alternate: Lys-81 and Lys-87. An NAD(+)-binding site is contributed by Glu-122. Lys-125 is modified (N6-acetyllysine). Residue Lys-127 participates in NAD(+) binding. Lys-127 carries the N6-(2-hydroxyisobutyryl)lysine modification. Lys-136 is subject to N6-acetyllysine; alternate. Lys-136 bears the N6-succinyllysine; alternate mark. The NAD(+) site is built by Ser-149 and Asn-173. Residue Ser-149 coordinates CoA. Lys-179 is modified (N6-acetyllysine). Lys-185, Lys-192, and Lys-202 each carry N6-acetyllysine; alternate. N6-succinyllysine; alternate occurs at positions 185, 192, and 202. N6-succinyllysine is present on Lys-206. Lys-212 and Lys-241 each carry N6-acetyllysine; alternate. Lys-212 and Lys-241 each carry N6-succinyllysine; alternate. Residue Lys-305 coordinates NAD(+). At Lys-312 the chain carries N6-acetyllysine; alternate. An N6-succinyllysine; alternate modification is found at Lys-312.

This sequence belongs to the 3-hydroxyacyl-CoA dehydrogenase family. As to quaternary structure, homodimer. Interacts with GLUD1; this interaction inhibits the activation of glutamate dehydrogenase 1 (GLUD1). In terms of processing, succinylation at Lys-81, adjacent to a coenzyme A binding site. Desuccinylated by SIRT5. In terms of tissue distribution, expressed in liver, kidney, brain, and pancreatic islets.

The protein localises to the mitochondrion matrix. It localises to the nucleus. The protein resides in the cytoplasm. It is found in the cytosol. The enzyme catalyses a (3S)-3-hydroxyacyl-CoA + NAD(+) = a 3-oxoacyl-CoA + NADH + H(+). It carries out the reaction (3S)-3-hydroxybutanoyl-CoA + NAD(+) = acetoacetyl-CoA + NADH + H(+). It catalyses the reaction (3S)-hydroxydecanoyl-CoA + NAD(+) = 3-oxodecanoyl-CoA + NADH + H(+). The catalysed reaction is (3S)-hydroxyhexadecanoyl-CoA + NAD(+) = 3-oxohexadecanoyl-CoA + NADH + H(+). It functions in the pathway lipid metabolism; fatty acid beta-oxidation. In terms of biological role, mitochondrial fatty acid beta-oxidation enzyme that catalyzes the third step of the beta-oxidation cycle for medium and short-chain 3-hydroxy fatty acyl-CoAs (C4 to C10). Plays a role in the control of insulin secretion by inhibiting the activation of glutamate dehydrogenase 1 (GLUD1), an enzyme that has an important role in regulating amino acid-induced insulin secretion. Plays a role in the maintenance of normal spermatogenesis through the reduction of fatty acid accumulation in the testes. Inhibits cell proliferation. The chain is Hydroxyacyl-coenzyme A dehydrogenase, mitochondrial (Hadh) from Mus musculus (Mouse).